The primary structure comprises 866 residues: DNA replication licensing factor MCM4 (866 aa).

Disordered regions lie at residues 1–67 (MSSP…TSPA), 81–107 (SPLN…TPLR), and 124–145 (GGGS…PVSE). 2 stretches are compositionally biased toward polar residues: residues 47–63 (DNIS…SLPA) and 81–93 (SPLN…SMGS). Ser-55 and Ser-81 each carry phosphoserine. Thr-87 is subject to Phosphothreonine. An MCM domain is found at 460 to 669 (IYDRLARAIA…FDKRLASHLV (210 aa)). 512–519 (GDPGTSKS) provides a ligand contact to ATP. The Arginine finger motif lies at 644-647 (SRFD).

This sequence belongs to the MCM family. As to quaternary structure, component of the Mcm2-7 complex. The complex forms a toroidal hexameric ring with the proposed subunit order Mcm2-Mcm6-Mcm4-Mcm7-Mcm3-Mcm5. Phosphorylated by the catalytic component of the Dbf4-dependent kinase (DDK) complex Cdc7.

Its subcellular location is the nucleus. It carries out the reaction ATP + H2O = ADP + phosphate + H(+). Functionally, acts as a component of the Mcm2-7 complex (Mcm complex) which is the putative replicative helicase essential for 'once per cell cycle' DNA replication initiation and elongation in eukaryotic cells. The active ATPase sites in the Mcm2-7 ring are formed through the interaction surfaces of two neighboring subunits such that a critical structure of a conserved arginine finger motif is provided in trans relative to the ATP-binding site of the Walker A box of the adjacent subunit. The six ATPase active sites, however, are likely to contribute differentially to the complex helicase activity. Required for DNA replication and cell proliferation. Essential role in mitotic DNA replication but not in endoreplication. The polypeptide is DNA replication licensing factor MCM4 (dpa) (Drosophila melanogaster (Fruit fly)).